Here is a 210-residue protein sequence, read N- to C-terminus: Probable GTP-binding protein EngB (210 aa).

The region spanning 27–201 is the EngB-type G domain; it reads MGIEVAFAGR…HQKLDIWFSQ (175 aa). GTP contacts are provided by residues 35 to 42, 62 to 66, 80 to 83, 147 to 150, and 180 to 182; these read GRSNAGKS, GRTQL, DLPG, TKAD, and FSV. Mg(2+)-binding residues include Ser-42 and Thr-64.

Belongs to the TRAFAC class TrmE-Era-EngA-EngB-Septin-like GTPase superfamily. EngB GTPase family. The cofactor is Mg(2+).

In terms of biological role, necessary for normal cell division and for the maintenance of normal septation. This is Probable GTP-binding protein EngB from Photorhabdus laumondii subsp. laumondii (strain DSM 15139 / CIP 105565 / TT01) (Photorhabdus luminescens subsp. laumondii).